Consider the following 58-residue polypeptide: Small ribosomal subunit protein bS21 (58 aa).

The disordered stretch occupies residues 34–58 (KREHYESPSVRRKKKSEAARRRKRR). Basic residues predominate over residues 43-58 (VRRKKKSEAARRRKRR).

Belongs to the bacterial ribosomal protein bS21 family.

In Caldicellulosiruptor bescii (strain ATCC BAA-1888 / DSM 6725 / KCTC 15123 / Z-1320) (Anaerocellum thermophilum), this protein is Small ribosomal subunit protein bS21.